Consider the following 266-residue polypeptide: RNA polymerase II subunit A C-terminal domain phosphatase ssu-72 (266 aa).

The disordered stretch occupies residues 1 to 31 (MSAVDTPTGAASSSKPDQNEQNGQNGGREDS). The segment covering 9–23 (GAASSSKPDQNEQNG) has biased composition (polar residues).

Belongs to the SSU72 phosphatase family. As to quaternary structure, component of the cleavage and polyadenylation factor (CPF) complex.

It is found in the nucleus. The enzyme catalyses O-phospho-L-seryl-[protein] + H2O = L-seryl-[protein] + phosphate. The catalysed reaction is O-phospho-L-threonyl-[protein] + H2O = L-threonyl-[protein] + phosphate. Functionally, processively dephosphorylates Ser-5 of the heptad repeats YSPTSPS in the C-terminal domain of the largest RNA polymerase II subunit (rpb-1). In terms of biological role, component of the cleavage and polyadenylation factor (CPF) complex, which plays a key role in polyadenylation-dependent pre-mRNA 3'-end formation and cooperates with cleavage factors including the CFIA complex and NAB4/CFIB. Ssu-72 is required for 3'-end formation of snoRNAs. This Neurospora crassa (strain ATCC 24698 / 74-OR23-1A / CBS 708.71 / DSM 1257 / FGSC 987) protein is RNA polymerase II subunit A C-terminal domain phosphatase ssu-72 (ssu-72).